The sequence spans 51 residues: Sperm protamine P1 (51 aa).

Intrachain disulfides connect C7/C15 and C40/C48.

The protein belongs to the protamine P1 family. As to quaternary structure, cross-linked by interchain disulfide bonds around the DNA-helix. In terms of processing, phosphorylated by SRPK1. Testis.

The protein resides in the nucleus. It localises to the chromosome. In terms of biological role, protamines substitute for histones in the chromatin of sperm during the haploid phase of spermatogenesis. They compact sperm DNA into a highly condensed, stable and inactive complex. This chain is Sperm protamine P1 (PRM1), found in Bos taurus (Bovine).